Here is a 204-residue protein sequence, read N- to C-terminus: Holliday junction branch migration complex subunit RuvA (204 aa).

A domain I region spans residues Met-1–Gly-67. The interval Ser-68–Asp-146 is domain II. The interval Arg-147–Ala-156 is flexible linker. The tract at residues Ala-156 to Pro-204 is domain III.

This sequence belongs to the RuvA family. Homotetramer. Forms an RuvA(8)-RuvB(12)-Holliday junction (HJ) complex. HJ DNA is sandwiched between 2 RuvA tetramers; dsDNA enters through RuvA and exits via RuvB. An RuvB hexamer assembles on each DNA strand where it exits the tetramer. Each RuvB hexamer is contacted by two RuvA subunits (via domain III) on 2 adjacent RuvB subunits; this complex drives branch migration. In the full resolvosome a probable DNA-RuvA(4)-RuvB(12)-RuvC(2) complex forms which resolves the HJ.

The protein resides in the cytoplasm. Its function is as follows. The RuvA-RuvB-RuvC complex processes Holliday junction (HJ) DNA during genetic recombination and DNA repair, while the RuvA-RuvB complex plays an important role in the rescue of blocked DNA replication forks via replication fork reversal (RFR). RuvA specifically binds to HJ cruciform DNA, conferring on it an open structure. The RuvB hexamer acts as an ATP-dependent pump, pulling dsDNA into and through the RuvAB complex. HJ branch migration allows RuvC to scan DNA until it finds its consensus sequence, where it cleaves and resolves the cruciform DNA. The protein is Holliday junction branch migration complex subunit RuvA of Synechococcus sp. (strain JA-3-3Ab) (Cyanobacteria bacterium Yellowstone A-Prime).